A 183-amino-acid polypeptide reads, in one-letter code: DELTA-miturgitoxin-Cp1c (183 aa).

The N-terminal stretch at Met-1 to Ser-20 is a signal peptide. The propeptide occupies Glu-21–Arg-47. A Processing quadruplet motif motif is present at residues Asp-44–Arg-47. Disulfide bonds link Cys-51-Cys-66, Cys-58-Cys-75, Cys-65-Cys-88, Cys-77-Cys-86, Cys-115-Cys-130, Cys-122-Cys-139, Cys-129-Cys-157, and Cys-141-Cys-155. Residues Gln-164–Ile-177 are predicted alpha-helix. Trp-181 carries the post-translational modification Tryptophan amide.

It belongs to the neurotoxin 19 (CSTX) family. Double-CSTX subfamily. Cleavage of the propeptide depends on the processing quadruplet motif (XXXR, with at least one of X being E). In terms of tissue distribution, expressed by the venom gland.

Its subcellular location is the secreted. It localises to the target cell membrane. Functionally, spider venom toxin that exhibits cytolytic activity by forming an alpha-helix across the membrane. Lethal to insect larvae. Causes instant paralysis and death in the larvae of the flesh fly (S.carnaria) at doses of 20 ug/g, at doses of less than 10 ug/g causes reversible paralysis. Has cytolytic activity against insect Sf9 cells. Causes stable and irreversible depolarization of fly muscle fibers, leading to contracture at higher toxin concentrations. Destabilizes membranes. The chain is DELTA-miturgitoxin-Cp1c from Cheiracanthium punctorium (Yellow sac spider).